Here is a 305-residue protein sequence, read N- to C-terminus: Aspartate carbamoyltransferase catalytic subunit (305 aa).

Residues Arg-54 and Thr-55 each contribute to the carbamoyl phosphate site. Lys-83 provides a ligand contact to L-aspartate. Residues Arg-104, His-132, and Gln-135 each contribute to the carbamoyl phosphate site. Residues Arg-165 and Arg-226 each coordinate L-aspartate. Carbamoyl phosphate is bound by residues Leu-265 and Pro-266.

It belongs to the aspartate/ornithine carbamoyltransferase superfamily. ATCase family. As to quaternary structure, heterooligomer of catalytic and regulatory chains.

It catalyses the reaction carbamoyl phosphate + L-aspartate = N-carbamoyl-L-aspartate + phosphate + H(+). It participates in pyrimidine metabolism; UMP biosynthesis via de novo pathway; (S)-dihydroorotate from bicarbonate: step 2/3. Its function is as follows. Catalyzes the condensation of carbamoyl phosphate and aspartate to form carbamoyl aspartate and inorganic phosphate, the committed step in the de novo pyrimidine nucleotide biosynthesis pathway. This chain is Aspartate carbamoyltransferase catalytic subunit, found in Pyrobaculum calidifontis (strain DSM 21063 / JCM 11548 / VA1).